Reading from the N-terminus, the 163-residue chain is NADH-quinone oxidoreductase subunit I (163 aa).

4Fe-4S ferredoxin-type domains are found at residues 53–83 and 94–123; these read LRRY…IEAG and VRYD…EGPN. [4Fe-4S] cluster contacts are provided by Cys63, Cys66, Cys69, Cys73, Cys103, Cys106, Cys109, and Cys113.

It belongs to the complex I 23 kDa subunit family. NDH-1 is composed of 14 different subunits. Subunits NuoA, H, J, K, L, M, N constitute the membrane sector of the complex. It depends on [4Fe-4S] cluster as a cofactor.

Its subcellular location is the cell inner membrane. It carries out the reaction a quinone + NADH + 5 H(+)(in) = a quinol + NAD(+) + 4 H(+)(out). In terms of biological role, NDH-1 shuttles electrons from NADH, via FMN and iron-sulfur (Fe-S) centers, to quinones in the respiratory chain. The immediate electron acceptor for the enzyme in this species is believed to be ubiquinone. Couples the redox reaction to proton translocation (for every two electrons transferred, four hydrogen ions are translocated across the cytoplasmic membrane), and thus conserves the redox energy in a proton gradient. The polypeptide is NADH-quinone oxidoreductase subunit I (Brucella melitensis biotype 1 (strain ATCC 23456 / CCUG 17765 / NCTC 10094 / 16M)).